Reading from the N-terminus, the 87-residue chain is UPF0250 protein NT01EI_2946 (87 aa).

This sequence belongs to the UPF0250 family.

The chain is UPF0250 protein NT01EI_2946 from Edwardsiella ictaluri (strain 93-146).